The following is a 286-amino-acid chain: Shikimate dehydrogenase (NADP(+)) (286 aa).

Shikimate contacts are provided by residues 19–21 and threonine 66; that span reads SLS. Lysine 70 (proton acceptor) is an active-site residue. The shikimate site is built by asparagine 91 and aspartate 107. Residues 129–133 and leucine 229 contribute to the NADP(+) site; that span reads GSGGA. Residue tyrosine 231 coordinates shikimate. Glycine 252 contributes to the NADP(+) binding site.

Belongs to the shikimate dehydrogenase family. As to quaternary structure, homodimer.

The catalysed reaction is shikimate + NADP(+) = 3-dehydroshikimate + NADPH + H(+). Its pathway is metabolic intermediate biosynthesis; chorismate biosynthesis; chorismate from D-erythrose 4-phosphate and phosphoenolpyruvate: step 4/7. Its function is as follows. Involved in the biosynthesis of the chorismate, which leads to the biosynthesis of aromatic amino acids. Catalyzes the reversible NADPH linked reduction of 3-dehydroshikimate (DHSA) to yield shikimate (SA). This Prochlorococcus marinus (strain AS9601) protein is Shikimate dehydrogenase (NADP(+)).